Reading from the N-terminus, the 293-residue chain is Phosphatidylglycerol--prolipoprotein diacylglyceryl transferase (293 aa).

4 consecutive transmembrane segments (helical) span residues 4-24 (ILAFLSIAAGSTLFFVFLFIF), 45-65 (FELRWYSTLILTGFLISYFVA), 81-101 (ELIFYGVIAGIVGARLYYVLF), and 115-135 (IWEGGLAIHGAVIGALLTGFL). A 1,2-diacyl-sn-glycero-3-phospho-(1'-sn-glycerol) is bound at residue Arg-165. The next 3 helical transmembrane spans lie at 204 to 224 (PTFLYESIWDLLVFFMLSVYF), 231 to 249 (HGEVTCLYFVLYSLGRIVI), and 262 to 282 (IKAAQLLSAVLILLGFTGFLI).

Belongs to the Lgt family.

The protein localises to the cell inner membrane. It carries out the reaction L-cysteinyl-[prolipoprotein] + a 1,2-diacyl-sn-glycero-3-phospho-(1'-sn-glycerol) = an S-1,2-diacyl-sn-glyceryl-L-cysteinyl-[prolipoprotein] + sn-glycerol 1-phosphate + H(+). It participates in protein modification; lipoprotein biosynthesis (diacylglyceryl transfer). Catalyzes the transfer of the diacylglyceryl group from phosphatidylglycerol to the sulfhydryl group of the N-terminal cysteine of a prolipoprotein, the first step in the formation of mature lipoproteins. The sequence is that of Phosphatidylglycerol--prolipoprotein diacylglyceryl transferase from Thermotoga petrophila (strain ATCC BAA-488 / DSM 13995 / JCM 10881 / RKU-1).